A 702-amino-acid polypeptide reads, in one-letter code: Polyribonucleotide nucleotidyltransferase (702 aa).

Mg(2+) is bound by residues aspartate 486 and aspartate 492. One can recognise a KH domain in the interval 553–612; the sequence is PSMATIKIDPEKIRDVIGKGGATIRSITEQTGASIDLDDDGTVRIYAADKASSDAALLKI. The S1 motif domain occupies 622–690; sequence DKLYKGKVVR…ARGRIKLSMK (69 aa).

The protein belongs to the polyribonucleotide nucleotidyltransferase family. As to quaternary structure, component of the RNA degradosome, which is a multiprotein complex involved in RNA processing and mRNA degradation. It depends on Mg(2+) as a cofactor.

The protein localises to the cytoplasm. The catalysed reaction is RNA(n+1) + phosphate = RNA(n) + a ribonucleoside 5'-diphosphate. Functionally, involved in mRNA degradation. Catalyzes the phosphorolysis of single-stranded polyribonucleotides processively in the 3'- to 5'-direction. The protein is Polyribonucleotide nucleotidyltransferase of Marinomonas sp. (strain MWYL1).